The following is a 335-amino-acid chain: Dihydroorotate dehydrogenase (quinone) (335 aa).

FMN contacts are provided by residues 59–63 and Thr83; that span reads AGLDK. Substrate is bound at residue Lys63. 108–112 provides a ligand contact to substrate; sequence NRMGF. 2 residues coordinate FMN: Asn136 and Asn169. Asn169 lines the substrate pocket. Ser172 (nucleophile) is an active-site residue. A substrate-binding site is contributed by Asn174. Residues Lys214 and Thr242 each coordinate FMN. Residue 243–244 participates in substrate binding; that stretch reads NT. Residues Gly265, Gly294, and 315–316 contribute to the FMN site; that span reads YS.

Belongs to the dihydroorotate dehydrogenase family. Type 2 subfamily. Monomer. FMN is required as a cofactor.

The protein localises to the cell membrane. The enzyme catalyses (S)-dihydroorotate + a quinone = orotate + a quinol. It participates in pyrimidine metabolism; UMP biosynthesis via de novo pathway; orotate from (S)-dihydroorotate (quinone route): step 1/1. Functionally, catalyzes the conversion of dihydroorotate to orotate with quinone as electron acceptor. This Neisseria meningitidis serogroup B (strain ATCC BAA-335 / MC58) protein is Dihydroorotate dehydrogenase (quinone).